Reading from the N-terminus, the 147-residue chain is Leghemoglobin 8 (147 aa).

The region spanning Gly2 to Ser147 is the Globin domain. A nitrated tyrosine mark is found at Tyr25 and Tyr30. Heme b is bound at residue Ser45. Ser45 is subject to Phosphoserine. His62 contributes to the O2 binding site. Heme b is bound by residues Lys65, His94, and Lys97. A Nitrated tyrosine modification is found at Tyr135.

Belongs to the plant globin family. In terms of assembly, monomer. Interacts with CAS31 in the cytoplasm; this interaction leads to its protection from denaturation under thermal and drought stresses. In terms of processing, nitrated in effective nodules and particularly in hypoxic conditions; this mechanism may play a protective role in the symbiosis by buffering toxic peroxynitrite NO(2)(-). Nitration level decrease during nodule senescence. Post-translationally, phosphorylation at Ser-45 disrupts the molecular environment of its porphyrin ring oxygen binding pocket, thus leading to a reduced oxygen consumption and to the delivery of oxygen O(2) to symbiosomes. As to expression, root nodules.

It is found in the cytoplasm. It localises to the nucleus. Its function is as follows. Leghemoglobin that reversibly binds oxygen O(2) through a pentacoordinated heme iron. In root nodules, facilitates the diffusion of oxygen to the bacteroids while preventing the bacterial nitrogenase from being inactivated by buffering dioxygen, nitric oxide and carbon monoxide, and promoting the formation of reactive oxygen species (ROS, e.g. H(2)O(2)). This role is essential for symbiotic nitrogen fixation (SNF). The protein is Leghemoglobin 8 of Medicago truncatula (Barrel medic).